Here is a 393-residue protein sequence, read N- to C-terminus: DNA primase large subunit PriL (393 aa).

[4Fe-4S] cluster-binding residues include Cys230, Cys339, Cys350, and Cys356.

It belongs to the eukaryotic-type primase large subunit family. In terms of assembly, heterodimer of a small subunit (PriS) and a large subunit (PriL). [4Fe-4S] cluster is required as a cofactor.

In terms of biological role, regulatory subunit of DNA primase, an RNA polymerase that catalyzes the synthesis of short RNA molecules used as primers for DNA polymerase during DNA replication. Stabilizes and modulates the activity of the small subunit, increasing the rate of DNA synthesis, and conferring RNA synthesis capability. The DNA polymerase activity may enable DNA primase to also catalyze primer extension after primer synthesis. May also play a role in DNA repair. Displays gap-filling and strand-displacement activities. This Pyrococcus abyssi (strain GE5 / Orsay) protein is DNA primase large subunit PriL.